Consider the following 185-residue polypeptide: Threonylcarbamoyl-AMP synthase (185 aa).

The YrdC-like domain occupies 4–185 (SWRVQQAAQD…IATAQIVRAG (182 aa)).

It belongs to the SUA5 family. TsaC subfamily.

The protein localises to the cytoplasm. The catalysed reaction is L-threonine + hydrogencarbonate + ATP = L-threonylcarbamoyladenylate + diphosphate + H2O. Its function is as follows. Required for the formation of a threonylcarbamoyl group on adenosine at position 37 (t(6)A37) in tRNAs that read codons beginning with adenine. Catalyzes the conversion of L-threonine, HCO(3)(-)/CO(2) and ATP to give threonylcarbamoyl-AMP (TC-AMP) as the acyladenylate intermediate, with the release of diphosphate. This is Threonylcarbamoyl-AMP synthase from Pseudomonas syringae pv. syringae (strain B728a).